The chain runs to 150 residues: UPF0756 membrane protein Dd703_1075 (150 aa).

A run of 4 helical transmembrane segments spans residues 8 to 28, 51 to 71, 81 to 101, and 114 to 134; these read LLIL…TITL, YGLS…IASG, AFLN…SWLG, and VVAG…GVPV.

It belongs to the UPF0756 family.

Its subcellular location is the cell membrane. The protein is UPF0756 membrane protein Dd703_1075 of Musicola paradisiaca (strain Ech703) (Dickeya paradisiaca).